We begin with the raw amino-acid sequence, 1200 residues long: PAN2-PAN3 deadenylation complex catalytic subunit Pan2 (1200 aa).

WD repeat units lie at residues 153–193 (DENE…QKYA), 195–231 (ETPGVTIMRQTNRFFFCGHTSGKVSLRDLRSFKVEHE), 244–280 (VHGNLLAACGFSSRLTGLACDRFLKVYDLRMMRAITP), and 328–367 (PVGPLLMTFDVSASKQALAFGDSEGCVHLWTDSPEPSFNP). A linker region spans residues 368-484 (YSRETEFALP…PTGREEEPLH (117 aa)). A USP domain is found at 485 to 923 (TVSKKYRKVT…VPAILYYVKR (439 aa)). Position 784 is a phosphoserine (Ser784). One can recognise an Exonuclease domain in the interval 974-1146 (VGLDAEFVTL…EDARTALQLY (173 aa)). Residues Asp977, Glu979, Asp1086, and Asp1138 each coordinate a divalent metal cation. At Ser1188 the chain carries Phosphoserine.

Belongs to the peptidase C19 family. PAN2 subfamily. As to quaternary structure, forms a heterotrimer with an asymmetric homodimer of the regulatory subunit PAN3 to form the poly(A)-nuclease (PAN) deadenylation complex. Interacts with PAN3 isoform 1/Pan3L and isoform 3/Pan3S. Interacts with ZFP36. A divalent metal cation serves as cofactor.

Its subcellular location is the cytoplasm. It is found in the P-body. It localises to the nucleus. It catalyses the reaction Exonucleolytic cleavage of poly(A) to 5'-AMP.. Its activity is regulated as follows. Positively regulated by the regulatory subunit PAN3. In terms of biological role, catalytic subunit of the poly(A)-nuclease (PAN) deadenylation complex, one of two cytoplasmic mRNA deadenylases involved in general and miRNA-mediated mRNA turnover. PAN specifically shortens poly(A) tails of RNA and the activity is stimulated by poly(A)-binding protein (PABP). PAN deadenylation is followed by rapid degradation of the shortened mRNA tails by the CCR4-NOT complex. Deadenylated mRNAs are then degraded by two alternative mechanisms, namely exosome-mediated 3'-5' exonucleolytic degradation, or deadenylation-dependent mRNA decaping and subsequent 5'-3' exonucleolytic degradation by XRN1. Also acts as an important regulator of the HIF1A-mediated hypoxic response. Required for HIF1A mRNA stability independent of poly(A) tail length regulation. In Mus musculus (Mouse), this protein is PAN2-PAN3 deadenylation complex catalytic subunit Pan2.